Consider the following 82-residue polypeptide: ATP synthase subunit c, chloroplastic (82 aa).

2 helical membrane-spanning segments follow: residues 3-23 and 57-77; these read PLIAAASVVAAGLSVGLAAIG and FAFMESLTIYGLVVALALLFA.

This sequence belongs to the ATPase C chain family. F-type ATPases have 2 components, F(1) - the catalytic core - and F(0) - the membrane proton channel. F(1) has five subunits: alpha(3), beta(3), gamma(1), delta(1), epsilon(1). F(0) has four main subunits: a(1), b(1), b'(1) and c(10-14). The alpha and beta chains form an alternating ring which encloses part of the gamma chain. F(1) is attached to F(0) by a central stalk formed by the gamma and epsilon chains, while a peripheral stalk is formed by the delta, b and b' chains.

It localises to the plastid. It is found in the chloroplast thylakoid membrane. Its function is as follows. F(1)F(0) ATP synthase produces ATP from ADP in the presence of a proton or sodium gradient. F-type ATPases consist of two structural domains, F(1) containing the extramembraneous catalytic core and F(0) containing the membrane proton channel, linked together by a central stalk and a peripheral stalk. During catalysis, ATP synthesis in the catalytic domain of F(1) is coupled via a rotary mechanism of the central stalk subunits to proton translocation. Key component of the F(0) channel; it plays a direct role in translocation across the membrane. A homomeric c-ring of between 10-14 subunits forms the central stalk rotor element with the F(1) delta and epsilon subunits. The polypeptide is ATP synthase subunit c, chloroplastic (Oltmannsiellopsis viridis (Marine flagellate)).